A 650-amino-acid polypeptide reads, in one-letter code: L-aspartate N-monooxygenase (nitrosuccinate-forming) (650 aa).

This sequence belongs to the nitrosuccinic acid synthase family. The cofactor is FAD.

It carries out the reaction L-aspartate + 3 NADPH + 3 O2 + 2 H(+) = 2-nitrobutanedioate + 3 NADP(+) + 4 H2O. Involved in the biosynthesis of desferrioxamine derivatives which have iron-binding properties and may act as siderophores. Catalyzes the iterative oxidation of L-aspartic acid to nitrosuccinic acid (2-nitrobutanedioate) via N-hydroxyaspartic acid and nitrososuccinic acid. In Streptomyces davaonensis (strain DSM 101723 / JCM 4913 / KCC S-0913 / 768), this protein is L-aspartate N-monooxygenase (nitrosuccinate-forming).